The sequence spans 262 residues: uncharacterized protein (262 aa).

This is an uncharacterized protein from Acanthamoeba polyphaga mimivirus (APMV).